The following is a 135-amino-acid chain: Large ribosomal subunit protein uL16c (135 aa).

Belongs to the universal ribosomal protein uL16 family. As to quaternary structure, part of the 50S ribosomal subunit.

It is found in the plastid. Its subcellular location is the chloroplast. In Olimarabidopsis pumila (Dwarf rocket), this protein is Large ribosomal subunit protein uL16c.